A 196-amino-acid chain; its full sequence is Pyridoxine/pyridoxamine 5'-phosphate oxidase (196 aa).

Residues 46–51, 61–62, Arg-67, Lys-68, and Gln-90 contribute to the FMN site; these read RNVLYK and FT. Substrate is bound at residue Lys-51. Substrate is bound by residues Tyr-108, Arg-112, and Ser-116. FMN is bound by residues 125–126 and Trp-169; that span reads QS. 175–177 is a substrate binding site; that stretch reads RLH. Residue Arg-179 participates in FMN binding.

It belongs to the pyridoxamine 5'-phosphate oxidase family. As to quaternary structure, homodimer. FMN serves as cofactor.

The enzyme catalyses pyridoxamine 5'-phosphate + O2 + H2O = pyridoxal 5'-phosphate + H2O2 + NH4(+). It catalyses the reaction pyridoxine 5'-phosphate + O2 = pyridoxal 5'-phosphate + H2O2. It participates in cofactor metabolism; pyridoxal 5'-phosphate salvage; pyridoxal 5'-phosphate from pyridoxamine 5'-phosphate: step 1/1. It functions in the pathway cofactor metabolism; pyridoxal 5'-phosphate salvage; pyridoxal 5'-phosphate from pyridoxine 5'-phosphate: step 1/1. Functionally, catalyzes the oxidation of either pyridoxine 5'-phosphate (PNP) or pyridoxamine 5'-phosphate (PMP) into pyridoxal 5'-phosphate (PLP). This chain is Pyridoxine/pyridoxamine 5'-phosphate oxidase, found in Coxiella burnetii (strain RSA 493 / Nine Mile phase I).